The following is a 1093-amino-acid chain: Regulator of nonsense transcripts 1 homolog (1093 aa).

The interval 42-79 (YGVYGGRGPRGNGRRRHDDDDNETEVLDDDDDESLASV) is disordered. Acidic residues predominate over residues 61–75 (DDNETEVLDDDDDES). One can recognise a Upf1 CH-rich domain in the interval 95-252 (EKELPPHACA…AKLEEMWKEA (158 aa)). 12 residues coordinate Zn(2+): Cys103, Cys106, Cys117, Cys120, Cys125, His135, His139, His145, Cys163, Cys166, Cys189, and Cys193. The interval 103–135 (CAYCGIHSPSSVVKCLTCNKWFCSAKGSAFSSH) is C3H. Residues 117 to 145 (CLTCNKWFCSAKGSAFSSHIVNHLVRARH) are CC/SHH/C. Residues 163 to 193 (CYNCGTKNVFILGFIPAKSDTVVVLLCRQPC) form a C4 region. Residues Gln460, 480-484 (GTGKT), Gln650, Tyr687, and Glu818 contribute to the ATP site.

The protein belongs to the DNA2/NAM7 helicase family.

It localises to the cytoplasm. The catalysed reaction is ATP + H2O = ADP + phosphate + H(+). RNA-dependent helicase required for nonsense-mediated decay (NMD) of aberrant mRNAs containing premature stop codons and modulates the expression level of normal mRNAs. Also capable of unwinding double-stranded DNA and translocating on single-stranded DNA. The sequence is that of Regulator of nonsense transcripts 1 homolog from Neurospora crassa (strain ATCC 24698 / 74-OR23-1A / CBS 708.71 / DSM 1257 / FGSC 987).